The chain runs to 1795 residues: Type III effector AvrE (1795 aa).

The span at 1 to 18 (MQSPSIHRNTGSIIQPTV) shows a compositional bias: polar residues. Positions 1 to 227 (MQSPSIHRNT…PPREPMLWRS (227 aa)) are disordered. The span at 60-75 (KSKAPQQKAATPPTAK) shows a compositional bias: low complexity. Composition is skewed to polar residues over residues 97-109 (GFSN…THSA) and 117-127 (HPNQASSSGAQ). Basic and acidic residues predominate over residues 129–154 (HEIHPEAAPRKNLRVRFDLPQDRLER). The span at 174-191 (ATRQFRSPDSHLQGSDGT) shows a compositional bias: polar residues. Over residues 203–215 (PSSSGSKIGDSDG) the composition is skewed to low complexity. 2 consecutive short sequence motifs (wxxxE) follow at residues 393–397 (WKIPE) and 829–833 (WQRFE). The tract at residues 1461-1488 (QIGGSHTAPTGTPASAPGPTPASQTAAN) is disordered. Over residues 1467 to 1487 (TAPTGTPASAPGPTPASQTAA) the composition is skewed to low complexity. Positions 1787-1790 (KKEG) match the ERMRS motif.

The protein belongs to the AvrE family. In terms of assembly, in planta interaction assays, interacts with the A.thaliana protein phosphatase 2A (PP2A) via direct interaction/association with specific B' regulatory subunits.

It localises to the secreted. It is found in the host cell. The protein localises to the host cell membrane. Its activity is regulated as follows. Polyamidoamine dendrimers inhibit channel and virulence activities. Functionally, major virulence factor that may function as a water- and solute-permeable channel dedicated to creating osmotic/water potential perturbation and a water- and nutrient-rich apoplast in which bacteria multiply within the infected plant tissues. Expression in Xenopus oocytes results in inward and outward currents, permeability to water and osmolarity-dependent oocyte swelling and bursting. Its function is as follows. Elicits cell death in host tomato leaves and in non-host Nicotiana tabacum leaves. Acts within plant cells and promotes lesion formation. The combined action of AvrE and HopM1 is particularly important in promoting bacterial growth in plants. Contributes to the down-regulation of a specific subset of A.thaliana genes during infection, including NHL13, which is required for antibacterial immunity. The sequence is that of Type III effector AvrE from Pseudomonas syringae pv. tomato (strain ATCC BAA-871 / DC3000).